Reading from the N-terminus, the 137-residue chain is Glutamate mutase sigma subunit (137 aa).

A B12-binding domain is found at 3-137; it reads KKTIVLGVIG…ADLKEDLNIK (135 aa). Adenosylcob(III)alamin-binding positions include 13-17, histidine 16, 61-63, and 93-97; these read SDCHA, SSL, and NIVVG.

Belongs to the methylaspartate mutase GlmS subunit family. Heterotetramer composed of 2 epsilon subunits (GlmE) and 2 sigma subunits (GlmS). GlmE exists as a homodimer and GlmS as a monomer. It depends on adenosylcob(III)alamin as a cofactor.

It catalyses the reaction (2S,3S)-3-methyl-L-aspartate = L-glutamate. It participates in amino-acid degradation; L-glutamate degradation via mesaconate pathway; acetate and pyruvate from L-glutamate: step 1/4. Its function is as follows. Catalyzes the carbon skeleton rearrangement of L-glutamate to L-threo-3-methylaspartate ((2S,3S)-3-methylaspartate). This chain is Glutamate mutase sigma subunit, found in Clostridium tetani (strain Massachusetts / E88).